The following is a 309-amino-acid chain: Tyrosine recombinase XerD (309 aa).

The Core-binding (CB) domain maps to 3–88 (MRASLAIENF…ALRQFFRFLY (86 aa)). Positions 109-302 (PLPKIMSVEN…LEERLHKLVS (194 aa)) constitute a Tyr recombinase domain. Catalysis depends on residues R158, K182, H254, R257, and H280. The active-site O-(3'-phospho-DNA)-tyrosine intermediate is the Y289.

It belongs to the 'phage' integrase family. XerD subfamily. Forms a cyclic heterotetrameric complex composed of two molecules of XerC and two molecules of XerD.

The protein localises to the cytoplasm. Its function is as follows. Site-specific tyrosine recombinase, which acts by catalyzing the cutting and rejoining of the recombining DNA molecules. The XerC-XerD complex is essential to convert dimers of the bacterial chromosome into monomers to permit their segregation at cell division. It also contributes to the segregational stability of plasmids. This Brucella suis biovar 1 (strain 1330) protein is Tyrosine recombinase XerD.